Here is a 104-residue protein sequence, read N- to C-terminus: Small ribosomal subunit protein uS10 (104 aa).

This sequence belongs to the universal ribosomal protein uS10 family. In terms of assembly, part of the 30S ribosomal subunit.

In terms of biological role, involved in the binding of tRNA to the ribosomes. In Xanthomonas oryzae pv. oryzae (strain MAFF 311018), this protein is Small ribosomal subunit protein uS10.